The following is a 315-amino-acid chain: T cell receptor beta chain MC.7.G5 (315 aa).

The first 21 residues, 1 to 21, serve as a signal peptide directing secretion; sequence MTIRLLCYMGFYFLGAGLMEA. The Ig-like V-type domain occupies 22-114; that stretch reads DIYQTPRYLV…TSQYLCASSE (93 aa). Residues 22-114 form a t cell receptor beta variable 25-1 region; that stretch reads DIYQTPRYLV…TSQYLCASSE (93 aa). A disulfide bridge links cysteine 42 with cysteine 110. Residues 46–50 are CDR1; the sequence is MGHDK. The CDR2 stretch occupies residues 68–73; the sequence is SYGVNS. Asparagine 72 carries N-linked (GlcNAc...) asparagine glycosylation. The segment at 110–127 is CDR3; that stretch reads CASSEARGLAEFTDTQYF. Residues 122–136 are t cell receptor beta joining 2-3; that stretch reads TDTQYFGPGTRLTVL. The t cell receptor beta constant 2 stretch occupies residues 138 to 315; sequence DLKNVFPPEV…AMVKRKDSRG (178 aa). The Ig-like C1-type domain occupies 145–254; sequence PEVAVFEPSE…WTQDRAKPVT (110 aa). Cysteines 167 and 232 form a disulfide. N-linked (GlcNAc...) asparagine glycosylation occurs at asparagine 206. The tract at residues 267 to 281 is connecting peptide; it reads CGFTSESYQQGVLSA. A helical membrane pass occupies residues 282 to 304; sequence TILYEILLGKATLYAVLVSALVL. Topologically, residues 305–315 are cytoplasmic; the sequence is MAMVKRKDSRG.

Disulfide-linked heterodimer with TRAV38-2DV8*01J31*01C*01 alpha chain. The alpha-beta TR associates with the transmembrane signaling CD3 coreceptor proteins to form the TR-CD3 (TCR). The assembly of alpha-beta TR heterodimers with CD3 occurs in the endoplasmic reticulum where a single alpha-beta TR heterodimer associates with one CD3D-CD3E heterodimer, one CD3G-CD3E heterodimer and one CD247 homodimer forming a stable octameric structure. CD3D-CD3E and CD3G-CD3E heterodimers preferentially associate with TR alpha and TR beta chains (via TM domain), respectively. The association of the CD247 homodimer is the last step of TCR assembly in the endoplasmic reticulum and is required for transport to the cell surface. As to expression, expressed in MR1-restricted CD8-positive T cells.

The protein localises to the cell membrane. Its function is as follows. The beta chain of TRAV38-2DV8*01J31*01C*01/TRBV25-1*01J2S3*01C2*01 alpha-beta T cell receptor (TR) clonotype that displays pan-cancer cell recognition via the invariant MR1 molecule. On CD8-positive T cell clone MC.7.G5, likely recognizes tumor-specific or -associated metabolite(s) essential for cancer cell survival, triggering killing of many cancer cell types including lung, melanoma, leukemia, colon, breast, prostate, bone and ovarian cancer cells. Mediates cancer cell cytotoxicity in an HLA-independent manner. Has no reactivity to healthy cells even stressed or infected by bacteria. Antigen recognition initiates TR-CD3 clustering on the cell surface and intracellular activation of LCK that phosphorylates the ITAM motifs of CD3G, CD3D, CD3E and CD247 enabling the recruitment of ZAP70. In turn, ZAP70 phosphorylates LAT, which recruits numerous signaling molecules to form the LAT signalosome. The LAT signalosome propagates signal branching to three major signaling pathways, the calcium, the mitogen-activated protein kinase (MAPK) kinase and the nuclear factor NF-kappa-B (NF-kB) pathways, leading to the mobilization of transcription factors that are critical for gene expression and essential for T cell differentiation into effector/memory T cells. The protein is T cell receptor beta chain MC.7.G5 of Homo sapiens (Human).